The primary structure comprises 207 residues: Serotonin N-acetyltransferase (207 aa).

Residues 1–28 (MSTQSTHPLKPEAPRLPPGIPESPSCQR) form a disordered region. Threonine 31 is modified (phosphothreonine; by PKA). One can recognise an N-acetyltransferase domain in the interval 35–194 (SEFRCLTPED…SLTFMELHCS (160 aa)). Leucine 124 contributes to the substrate binding site. Acetyl-CoA is bound by residues 124 to 126 (LAV) and 132 to 137 (QQGRGP). Methionine 159 contributes to the substrate binding site. 168–170 (YER) is a binding site for acetyl-CoA. A Phosphoserine modification is found at serine 205.

The protein belongs to the acetyltransferase family. AANAT subfamily. Monomer. Interacts with several 14-3-3 proteins, including YWHAB, YWHAE, YWHAG and YWHAZ, preferentially when phosphorylated at Thr-31. Phosphorylation on Ser-205 also allows binding to YWHAZ, but with lower affinity. The interaction with YWHAZ considerably increases affinity for arylalkylamines and acetyl-CoA and protects the enzyme from dephosphorylation and proteasomal degradation. It may also prevent thiol-dependent inactivation. CAMP-dependent phosphorylation on both N-terminal Thr-31 and C-terminal Ser-205 regulates AANAT activity by promoting interaction with 14-3-3 proteins. In terms of tissue distribution, highly expressed in pineal gland and at lower levels in the retina. Weak expression in several brain regions and in the pituitary gland.

It is found in the cytoplasm. The enzyme catalyses a 2-arylethylamine + acetyl-CoA = an N-acetyl-2-arylethylamine + CoA + H(+). It functions in the pathway aromatic compound metabolism; melatonin biosynthesis; melatonin from serotonin: step 1/2. Controls the night/day rhythm of melatonin production in the pineal gland. Catalyzes the N-acetylation of serotonin into N-acetylserotonin, the penultimate step in the synthesis of melatonin. The polypeptide is Serotonin N-acetyltransferase (AANAT) (Homo sapiens (Human)).